The following is a 447-amino-acid chain: Glutamate--tRNA ligase 2 (447 aa).

Residues 9–19 carry the 'HIGH' region motif; it reads PSPTGYLHIGN. A 'KMSKS' region motif is present at residues 240–244; that stretch reads GLSKR. Lysine 243 serves as a coordination point for ATP.

The protein belongs to the class-I aminoacyl-tRNA synthetase family. Glutamate--tRNA ligase type 1 subfamily. As to quaternary structure, monomer.

Its subcellular location is the cytoplasm. It catalyses the reaction tRNA(Glu) + L-glutamate + ATP = L-glutamyl-tRNA(Glu) + AMP + diphosphate. Its function is as follows. Catalyzes the attachment of glutamate to tRNA(Glu) in a two-step reaction: glutamate is first activated by ATP to form Glu-AMP and then transferred to the acceptor end of tRNA(Glu). This Methylobacterium sp. (strain 4-46) protein is Glutamate--tRNA ligase 2.